The chain runs to 271 residues: Cobalt import ATP-binding protein CbiO (271 aa).

Residues 2-236 form the ABC transporter domain; the sequence is LATSDLWFRY…TEAMEHAGLT (235 aa). 34–41 is a binding site for ATP; the sequence is GANGCGKS.

The protein belongs to the ABC transporter superfamily. Cobalt importer (TC 3.A.1.18.1) family. As to quaternary structure, forms an energy-coupling factor (ECF) transporter complex composed of an ATP-binding protein (A component, CbiO), a transmembrane protein (T component, CbiQ) and 2 possible substrate-capture proteins (S components, CbiM and CbiN) of unknown stoichimetry.

Its subcellular location is the cell inner membrane. Its pathway is cofactor biosynthesis; adenosylcobalamin biosynthesis. Functionally, part of the energy-coupling factor (ECF) transporter complex CbiMNOQ involved in cobalt import. Presumably responsible for energy coupling to the transport system. This is Cobalt import ATP-binding protein CbiO from Salmonella typhi.